Consider the following 525-residue polypeptide: Neuropilin and tolloid-like protein 2 (525 aa).

Residues 1–22 (MALEQLCAVLKVLLITVLVVEG) form the signal peptide. The Extracellular portion of the chain corresponds to 23 to 347 (IAVAQKTQDG…GLFEQITKTH (325 aa)). Cystine bridges form between C45-C72, C100-C122, C177-C207, C234-C256, C297-C309, C304-C322, and C316-C331. CUB domains are found at residues 45–159 (CGIW…YSFI) and 177–292 (CQFE…FTSF). The 37-residue stretch at 296–332 (PCTSSTFFCHSNMCINNSLVCNGVQNCAYPWDENHCK) folds into the LDL-receptor class A domain. N311 carries an N-linked (GlcNAc...) asparagine glycan. A helical transmembrane segment spans residues 348–368 (GTIIGITSGIVLVLLIISILV). Topologically, residues 369–525 (QVKQPRKKVM…SAQASISIDF (157 aa)) are cytoplasmic. Position 409 is a phosphoserine (S409).

Interacts with GRIK2 and GRIK3, but neither with AMPA-nor with NMDA-sensitive glutamate receptors. In terms of processing, N-glycosylated. In terms of tissue distribution, expressed in brain tissues, including cerebellar granule cells (at protein level).

Its subcellular location is the cell membrane. Functionally, accessory subunit of neuronal kainate-sensitive glutamate receptors, GRIK2 and GRIK3. Increases kainate-receptor channel activity, slowing the decay kinetics of the receptors, without affecting their expression at the cell surface, and increasing the open probability of the receptor channels. Modulates the agonist sensitivity of kainate receptors. Slows the decay of kainate receptor-mediated excitatory postsynaptic currents (EPSCs), thus directly influencing synaptic transmission. This chain is Neuropilin and tolloid-like protein 2 (Neto2), found in Mus musculus (Mouse).